Consider the following 350-residue polypeptide: Phosphotriesterase-related protein (350 aa).

Positions 22, 24, 169, 201, 230, and 298 each coordinate a divalent metal cation.

The protein belongs to the metallo-dependent hydrolases superfamily. Phosphotriesterase family. It depends on a divalent metal cation as a cofactor.

This is Phosphotriesterase-related protein from Drosophila persimilis (Fruit fly).